A 110-amino-acid polypeptide reads, in one-letter code: MTDTLSRLAEVLESRKDAAADSSYVASLYHKGLNKILEKLGEESIETIIAAKDAAVSGDCSDVIYETADLWFHSMVMLAALGQHPQAVLDELDRRFGLSGHTEKAARTAE.

Belongs to the PRA-PH family.

Its subcellular location is the cytoplasm. It carries out the reaction 1-(5-phospho-beta-D-ribosyl)-ATP + H2O = 1-(5-phospho-beta-D-ribosyl)-5'-AMP + diphosphate + H(+). The protein operates within amino-acid biosynthesis; L-histidine biosynthesis; L-histidine from 5-phospho-alpha-D-ribose 1-diphosphate: step 2/9. This is Phosphoribosyl-ATP pyrophosphatase from Pseudomonas syringae pv. tomato (strain ATCC BAA-871 / DC3000).